A 352-amino-acid chain; its full sequence is Histidine biosynthesis bifunctional protein HisB (352 aa).

The histidinol-phosphatase stretch occupies residues 1-164 (MSQKILFIDR…EIENEILSSF (164 aa)). Catalysis depends on D9, which acts as the Nucleophile. Mg(2+)-binding residues include D9 and D11. D11 serves as the catalytic Proton donor. Residues C93, H95, C101, and C103 each coordinate Zn(2+). Mg(2+) is bound at residue D130. The segment at 165 to 352 (RSASYQRTTK…ENLASSKGVI (188 aa)) is imidazoleglycerol-phosphate dehydratase.

In the N-terminal section; belongs to the histidinol-phosphatase family. It in the C-terminal section; belongs to the imidazoleglycerol-phosphate dehydratase family. Mg(2+) is required as a cofactor. Zn(2+) serves as cofactor.

The protein resides in the cytoplasm. It carries out the reaction D-erythro-1-(imidazol-4-yl)glycerol 3-phosphate = 3-(imidazol-4-yl)-2-oxopropyl phosphate + H2O. The catalysed reaction is L-histidinol phosphate + H2O = L-histidinol + phosphate. Its pathway is amino-acid biosynthesis; L-histidine biosynthesis; L-histidine from 5-phospho-alpha-D-ribose 1-diphosphate: step 6/9. It functions in the pathway amino-acid biosynthesis; L-histidine biosynthesis; L-histidine from 5-phospho-alpha-D-ribose 1-diphosphate: step 8/9. The polypeptide is Histidine biosynthesis bifunctional protein HisB (Campylobacter jejuni subsp. doylei (strain ATCC BAA-1458 / RM4099 / 269.97)).